Reading from the N-terminus, the 197-residue chain is RNA chaperone ProQ (197 aa).

The interval 115–138 (RAAAKKAQQKKHPRKPANKNLKKE) is disordered. Residues 117-131 (AAKKAQQKKHPRKPA) show a composition bias toward basic residues.

The protein belongs to the ProQ family.

It localises to the cytoplasm. Its function is as follows. RNA chaperone with significant RNA binding, RNA strand exchange and RNA duplexing activities. This Haemophilus influenzae (strain ATCC 51907 / DSM 11121 / KW20 / Rd) protein is RNA chaperone ProQ.